Reading from the N-terminus, the 370-residue chain is Anhydro-N-acetylmuramic acid kinase (370 aa).

13 to 20 (GTSMDGVD) contacts ATP.

This sequence belongs to the anhydro-N-acetylmuramic acid kinase family.

The enzyme catalyses 1,6-anhydro-N-acetyl-beta-muramate + ATP + H2O = N-acetyl-D-muramate 6-phosphate + ADP + H(+). Its pathway is amino-sugar metabolism; 1,6-anhydro-N-acetylmuramate degradation. It participates in cell wall biogenesis; peptidoglycan recycling. Its function is as follows. Catalyzes the specific phosphorylation of 1,6-anhydro-N-acetylmuramic acid (anhMurNAc) with the simultaneous cleavage of the 1,6-anhydro ring, generating MurNAc-6-P. Is required for the utilization of anhMurNAc either imported from the medium or derived from its own cell wall murein, and thus plays a role in cell wall recycling. The chain is Anhydro-N-acetylmuramic acid kinase from Vibrio parahaemolyticus serotype O3:K6 (strain RIMD 2210633).